A 154-amino-acid chain; its full sequence is Bacterial ferritin (154 aa).

The region spanning 1 to 145 (MQGNQAVVDY…QQLRLIELIG (145 aa)) is the Ferritin-like diiron domain. 6 residues coordinate Fe cation: E18, E51, H54, E93, E127, and H130.

It belongs to the bacterioferritin family. Heterooligomer of 24 subunits, arranged as 12 dimers, that are packed together to form an approximately spherical molecule with a central cavity, in which large amounts of iron can be deposited.

The catalysed reaction is 4 Fe(2+) + O2 + 4 H(+) = 4 Fe(3+) + 2 H2O. The enzyme catalyses Fe(2+)(in) = Fe(2+)(out). In terms of biological role, iron-storage protein, whose ferroxidase center binds Fe(2+), oxidizes it using dioxygen to Fe(3+), and participates in the subsequent Fe(3+) oxide mineral core formation within the central cavity of the BFR protein shell. This is Bacterial ferritin (bfrA) from Neisseria meningitidis serogroup A / serotype 4A (strain DSM 15465 / Z2491).